A 190-amino-acid polypeptide reads, in one-letter code: CASP-like protein 2U1 (190 aa).

Over 1-16 the chain is Cytoplasmic; sequence MAFTSLLGSDAERKVA. Residues 17-37 form a helical membrane-spanning segment; it reads VAEVALRAVLCGLGALAAALV. The Extracellular portion of the chain corresponds to 38-59; the sequence is ATDTQTRTFFSLQKKATYTDMK. The helical transmembrane segment at 60-80 threads the bilayer; sequence AMVLLVAAAAAAAGYSLLQAA. The Cytoplasmic portion of the chain corresponds to 81 to 100; that stretch reads RCCCCVALLRTSIRPRARLL. The chain crosses the membrane as a helical span at residues 101 to 121; sequence LAWCVFACDQALAYALLAAVV. At 122–152 the chain is on the extracellular side; that stretch reads AALQASVVAKQGLPQLQWMAICALYGAFCRQ. The chain crosses the membrane as a helical span at residues 153–173; it reads AGAGVACAVAAAVDAALLAFL. The Cytoplasmic segment spans residues 174-190; the sequence is SAFNLFRLYGAKATTTT.

This sequence belongs to the Casparian strip membrane proteins (CASP) family. Homodimer and heterodimers.

It localises to the cell membrane. The polypeptide is CASP-like protein 2U1 (Zea mays (Maize)).